A 322-amino-acid polypeptide reads, in one-letter code: MVPSLALVPGEPAGIGPELCIRLAQQPRSDAHLIAYADPDTLHSAAKALCLSVRLLDPDQHARLPGDLPLHPVRQAAPTRFGTPDPANAAAVIAGLLGAAGDCLSGKLQGIVTGPVHKAVINAGGIAYTGTTELLAAQAGCPVVMMLANSIVRVALVTTHLPLRAVPEAITAEALARCLRITATAMQRDFGLEHPRIAVLGLNPHAGEDGLLGREELDVIIPVLDQLRSEGMQLIGPLPADTAFLPQKLTDFDAVVAMYHDQGLPVLKYSGFEQAVNITLGLPYPRVAVDHGTALELAGRGVADPSSLLAATALCARLAARS.

Threonine 132 serves as a coordination point for substrate. The a divalent metal cation site is built by histidine 160, histidine 205, and histidine 260. Substrate contacts are provided by lysine 268, asparagine 277, and arginine 286.

It belongs to the PdxA family. As to quaternary structure, homodimer. Zn(2+) is required as a cofactor. Mg(2+) serves as cofactor. The cofactor is Co(2+).

The protein localises to the cytoplasm. It carries out the reaction 4-(phosphooxy)-L-threonine + NAD(+) = 3-amino-2-oxopropyl phosphate + CO2 + NADH. Its pathway is cofactor biosynthesis; pyridoxine 5'-phosphate biosynthesis; pyridoxine 5'-phosphate from D-erythrose 4-phosphate: step 4/5. Catalyzes the NAD(P)-dependent oxidation of 4-(phosphooxy)-L-threonine (HTP) into 2-amino-3-oxo-4-(phosphooxy)butyric acid which spontaneously decarboxylates to form 3-amino-2-oxopropyl phosphate (AHAP). The sequence is that of 4-hydroxythreonine-4-phosphate dehydrogenase from Xanthomonas campestris pv. campestris (strain 8004).